The primary structure comprises 204 residues: FMN-dependent NADH:quinone oxidoreductase 5 (204 aa).

Residue Ser-10 participates in FMN binding.

Belongs to the azoreductase type 1 family. In terms of assembly, homodimer. It depends on FMN as a cofactor.

The catalysed reaction is 2 a quinone + NADH + H(+) = 2 a 1,4-benzosemiquinone + NAD(+). The enzyme catalyses N,N-dimethyl-1,4-phenylenediamine + anthranilate + 2 NAD(+) = 2-(4-dimethylaminophenyl)diazenylbenzoate + 2 NADH + 2 H(+). Quinone reductase that provides resistance to thiol-specific stress caused by electrophilic quinones. In terms of biological role, also exhibits azoreductase activity. Catalyzes the reductive cleavage of the azo bond in aromatic azo compounds to the corresponding amines. The sequence is that of FMN-dependent NADH:quinone oxidoreductase 5 from Burkholderia lata (strain ATCC 17760 / DSM 23089 / LMG 22485 / NCIMB 9086 / R18194 / 383).